We begin with the raw amino-acid sequence, 139 residues long: Nucleoside diphosphate kinase (139 aa).

ATP is bound by residues lysine 9, phenylalanine 57, arginine 85, threonine 91, arginine 102, and asparagine 112. Histidine 115 acts as the Pros-phosphohistidine intermediate in catalysis.

Belongs to the NDK family. In terms of assembly, homotetramer. Mg(2+) is required as a cofactor.

It is found in the cytoplasm. It carries out the reaction a 2'-deoxyribonucleoside 5'-diphosphate + ATP = a 2'-deoxyribonucleoside 5'-triphosphate + ADP. It catalyses the reaction a ribonucleoside 5'-diphosphate + ATP = a ribonucleoside 5'-triphosphate + ADP. Functionally, major role in the synthesis of nucleoside triphosphates other than ATP. The ATP gamma phosphate is transferred to the NDP beta phosphate via a ping-pong mechanism, using a phosphorylated active-site intermediate. The chain is Nucleoside diphosphate kinase from Desulfosudis oleivorans (strain DSM 6200 / JCM 39069 / Hxd3) (Desulfococcus oleovorans).